The sequence spans 306 residues: Protoheme IX farnesyltransferase (306 aa).

A run of 9 helical transmembrane segments spans residues 32–52 (VVAL…PGAL), 58–78 (IPAM…NHIV), 103–123 (NAIV…YALV), 126–146 (LTAF…TMYL), 153–173 (NITI…TAMT), 180–200 (ALLL…ALAI), 227–247 (ILLY…VGMS), 249–269 (WLYL…AWQL), and 278–298 (AMAT…ILLL).

This sequence belongs to the UbiA prenyltransferase family. Protoheme IX farnesyltransferase subfamily.

The protein localises to the cell inner membrane. The enzyme catalyses heme b + (2E,6E)-farnesyl diphosphate + H2O = Fe(II)-heme o + diphosphate. It functions in the pathway porphyrin-containing compound metabolism; heme O biosynthesis; heme O from protoheme: step 1/1. In terms of biological role, converts heme B (protoheme IX) to heme O by substitution of the vinyl group on carbon 2 of heme B porphyrin ring with a hydroxyethyl farnesyl side group. The chain is Protoheme IX farnesyltransferase from Colwellia psychrerythraea (strain 34H / ATCC BAA-681) (Vibrio psychroerythus).